The chain runs to 345 residues: 3-dehydroquinate synthase (345 aa).

This sequence belongs to the archaeal-type DHQ synthase family.

The enzyme catalyses 2-amino-2,3,7-trideoxy-D-lyxo-hept-6-ulosonate + NAD(+) + H2O = 3-dehydroquinate + NH4(+) + NADH + H(+). Its function is as follows. Catalyzes the oxidative deamination and cyclization of 2-amino-3,7-dideoxy-D-threo-hept-6-ulosonic acid (ADH) to yield 3-dehydroquinate (DHQ), which is fed into the canonical shikimic pathway of aromatic amino acid biosynthesis. This Methanocorpusculum labreanum (strain ATCC 43576 / DSM 4855 / Z) protein is 3-dehydroquinate synthase.